The sequence spans 295 residues: Trimeric intracellular cation channel type A (295 aa).

Residues 1-18 (MELLSALSLDDLAASFSK) are Lumenal-facing. Residues 19–39 (LPVFPLFDVAYYIISILYLKY) form a helical membrane-spanning segment. Topologically, residues 40 to 51 (EPGAVDLSKRSP) are cytoplasmic. Residues 52 to 72 (VASWLCAMLYCFGSYILADVL) form a helical membrane-spanning segment. Residues 73 to 84 (LGESPIHYFSNN) lie on the Lumenal side of the membrane. Glycine 74 serves as a coordination point for Ca(2+). Residues 85 to 105 (ANILLASAVWYLTFFCPLNIF) traverse the membrane as a helical segment. Residues 106-144 (YKIVSFLPVKLVLVGMKEVVRVRKIAMGIHHAHHHYHHG) are Cytoplasmic-facing. A 1,2-diacyl-sn-glycero-3-phospho-(1D-myo-inositol-4,5-bisphosphate)-binding residues include lysine 122 and arginine 126. Residues 145-165 (WVIMVLIGWVKGSGVALMSNL) traverse the membrane as a helical segment. Over 166-178 (EQLLRGVWKPETN) the chain is Lumenal. The helical transmembrane segment at 179 to 199 (EILHMSFPTKASLYGAILFTL) threads the bilayer. Residues 200–201 (QQ) lie on the Cytoplasmic side of the membrane. Residues 202-222 (AHWLPISKAYLIFFFTLFMAV) traverse the membrane as a helical segment. The Lumenal portion of the chain corresponds to 223 to 233 (CKIYMTATHSH). A helical membrane pass occupies residues 234-254 (GSPFAIFESGICYVLFAAANG). The Cytoplasmic segment spans residues 255–295 (DHDDHGNHHHHHDDHDVSHSAGKSKEEHNEGTRKRKTKKAE). Positions 258–295 (DHGNHHHHHDDHDVSHSAGKSKEEHNEGTRKRKTKKAE) are disordered. The span at 267-286 (DDHDVSHSAGKSKEEHNEGT) shows a compositional bias: basic and acidic residues.

Belongs to the TMEM38 family. Homotrimer; conformation seems to be controled by binding to diacylglycerol (DAG).

Its subcellular location is the sarcoplasmic reticulum membrane. It localises to the nucleus membrane. It catalyses the reaction K(+)(in) = K(+)(out). With respect to regulation, channel activity is activated by a change of voltage within the sarcoplasmic reticulum lumen and blocked by luminal high Ca(2+) levels. Functionally, intracellular monovalent cation channel required for maintenance of rapid intracellular calcium release. Acts as a potassium counter-ion channel that functions in synchronization with calcium release from intracellular stores. Opened by a change of voltage within the sarcoplasmic reticulum lumen. The sequence is that of Trimeric intracellular cation channel type A (tmem38a) from Xenopus laevis (African clawed frog).